Reading from the N-terminus, the 284-residue chain is tRNA uridine(34) hydroxylase (284 aa).

The 95-residue stretch at 132 to 226 (TGRPVVMLDT…YFEEVGGAHY (95 aa)) folds into the Rhodanese domain. Cys-186 serves as the catalytic Cysteine persulfide intermediate.

The protein belongs to the TrhO family.

It catalyses the reaction uridine(34) in tRNA + AH2 + O2 = 5-hydroxyuridine(34) in tRNA + A + H2O. Its function is as follows. Catalyzes oxygen-dependent 5-hydroxyuridine (ho5U) modification at position 34 in tRNAs. This is tRNA uridine(34) hydroxylase from Burkholderia lata (strain ATCC 17760 / DSM 23089 / LMG 22485 / NCIMB 9086 / R18194 / 383).